The chain runs to 548 residues: Glucose-6-phosphate isomerase 1 (548 aa).

Glu-353 functions as the Proton donor in the catalytic mechanism. Active-site residues include His-384 and Lys-512.

This sequence belongs to the GPI family.

Its subcellular location is the cytoplasm. It catalyses the reaction alpha-D-glucose 6-phosphate = beta-D-fructose 6-phosphate. The protein operates within carbohydrate biosynthesis; gluconeogenesis. It functions in the pathway carbohydrate degradation; glycolysis; D-glyceraldehyde 3-phosphate and glycerone phosphate from D-glucose: step 2/4. In terms of biological role, catalyzes the reversible isomerization of glucose-6-phosphate to fructose-6-phosphate. This chain is Glucose-6-phosphate isomerase 1, found in Neisseria meningitidis serogroup A / serotype 4A (strain DSM 15465 / Z2491).